Reading from the N-terminus, the 95-residue chain is Class II hydrophobin 3 (95 aa).

An N-terminal signal peptide occupies residues 1–16 (MKLLAVAALLAGAAIA). Intrachain disulfides connect Cys28–Cys77, Cys38–Cys68, Cys39–Cys51, and Cys78–Cys89.

This sequence belongs to the cerato-ulmin hydrophobin family.

The protein localises to the secreted. Its subcellular location is the cell wall. In terms of biological role, aerial growth, conidiation, and dispersal of filamentous fungi in the environment rely upon a capability of their secreting small amphipathic proteins called hydrophobins (HPBs) with low sequence identity. Class I can self-assemble into an outermost layer of rodlet bundles on aerial cell surfaces, conferring cellular hydrophobicity that supports fungal growth, development and dispersal; whereas Class II form highly ordered films at water-air interfaces through intermolecular interactions but contribute nothing to the rodlet structure. Hyd3 plays a neglectable role in hyphal growth and asexual development and does not seem involved in cellular hydrophobicity, conidial adhesion, stress tolerance nor insect pathogenicity. This is Class II hydrophobin 3 from Metarhizium robertsii (strain ARSEF 23 / ATCC MYA-3075) (Metarhizium anisopliae (strain ARSEF 23)).